The primary structure comprises 280 residues: Acetyl-coenzyme A carboxylase carboxyl transferase subunit beta (280 aa).

Residues 25 to 280 enclose the CoA carboxyltransferase N-terminal domain; that stretch reads VMRECPICHA…RLHTKENAYG (256 aa). Residues Cys-29, Cys-32, Cys-47, and Cys-50 each coordinate Zn(2+). The segment at 29-50 adopts a C4-type zinc-finger fold; sequence CPICHAKFLSMRLGRDHTCPKC.

Belongs to the AccD/PCCB family. In terms of assembly, acetyl-CoA carboxylase is a heterohexamer composed of biotin carboxyl carrier protein (AccB), biotin carboxylase (AccC) and two subunits each of ACCase subunit alpha (AccA) and ACCase subunit beta (AccD). Zn(2+) serves as cofactor.

The protein resides in the cytoplasm. It catalyses the reaction N(6)-carboxybiotinyl-L-lysyl-[protein] + acetyl-CoA = N(6)-biotinyl-L-lysyl-[protein] + malonyl-CoA. It functions in the pathway lipid metabolism; malonyl-CoA biosynthesis; malonyl-CoA from acetyl-CoA: step 1/1. Functionally, component of the acetyl coenzyme A carboxylase (ACC) complex. Biotin carboxylase (BC) catalyzes the carboxylation of biotin on its carrier protein (BCCP) and then the CO(2) group is transferred by the transcarboxylase to acetyl-CoA to form malonyl-CoA. This chain is Acetyl-coenzyme A carboxylase carboxyl transferase subunit beta, found in Lactobacillus helveticus (strain DPC 4571).